We begin with the raw amino-acid sequence, 665 residues long: LisH domain-containing protein ARMC9 (665 aa).

Positions 7-39 (HESELLGLVKEYLDFAEFEDTLKTFLKECKIKG) constitute a LisH domain. Positions 204–235 (QSNKDVLQQLHQQLVEAERRSMTYLKRYNRIQ) form a coiled coil. Ser-582 carries the phosphoserine modification. The segment covering 582-603 (SDDDEDEDDEEDHDTMEADLDK) has biased composition (acidic residues). 2 disordered regions span residues 582-604 (SDDD…LDKD) and 636-665 (RRGT…GYPA).

In terms of assembly, interacts with TOGARAM1, CCDC66, CEP104, CSPP1 and CEP290. Interacts with NDUFAF2.

It is found in the cytoplasm. The protein resides in the cytoskeleton. Its subcellular location is the cilium basal body. It localises to the cell projection. The protein localises to the cilium. It is found in the microtubule organizing center. The protein resides in the centrosome. Its subcellular location is the centriole. Functionally, involved in ciliogenesis. It is required for appropriate acetylation and polyglutamylation of ciliary microtubules, and regulation of cilium length. Acts as a positive regulator of hedgehog (Hh)signaling. May participate in the trafficking and/or retention of GLI2 and GLI3 proteins at the ciliary tip. This chain is LisH domain-containing protein ARMC9 (ARMC9), found in Bos taurus (Bovine).